A 507-amino-acid polypeptide reads, in one-letter code: ATP synthase subunit alpha, mitochondrial (507 aa).

171-178 (GDRQTGKT) lines the ATP pocket.

Belongs to the ATPase alpha/beta chains family. As to quaternary structure, F-type ATPases have 2 components, CF(1) - the catalytic core - and CF(0) - the membrane proton channel. CF(1) has five subunits: alpha(3), beta(3), gamma(1), delta(1), epsilon(1). CF(0) has three main subunits: a, b and c.

The protein localises to the mitochondrion. Its subcellular location is the mitochondrion inner membrane. Its function is as follows. Mitochondrial membrane ATP synthase (F(1)F(0) ATP synthase or Complex V) produces ATP from ADP in the presence of a proton gradient across the membrane which is generated by electron transport complexes of the respiratory chain. F-type ATPases consist of two structural domains, F(1) - containing the extramembraneous catalytic core, and F(0) - containing the membrane proton channel, linked together by a central stalk and a peripheral stalk. During catalysis, ATP synthesis in the catalytic domain of F(1) is coupled via a rotary mechanism of the central stalk subunits to proton translocation. Subunits alpha and beta form the catalytic core in F(1). Rotation of the central stalk against the surrounding alpha(3)beta(3) subunits leads to hydrolysis of ATP in three separate catalytic sites on the beta subunits. Subunit alpha does not bear the catalytic high-affinity ATP-binding sites. In Arabidopsis thaliana (Mouse-ear cress), this protein is ATP synthase subunit alpha, mitochondrial (ATPA).